A 912-amino-acid chain; its full sequence is MINSLLTRVFGSRNERQLRQLNRLVTQINALEPTIEKLSDAELQAKTPEFKQRLAAGESLDKILPEAFAVCREASRRVLGMRHYDVQLIGGMVLHLGKIAEMRTGEGKTLVATLPVYLNALQGEGVHVVTVNDYLARRDAAQMGKLYNWLGLSVGVVYPGMPHSDKREAYGADITYGTNNEFGFDYLRDNMALSRADRYQRNLHYAIVDEVDSILIDEARTPLIISGPADESPELYIRVNRIVPQLTRQESEEGEGDFWIDEKGKQVHLSEAGMGHAEELLLQAGILENAEDGLYAAQNLSVVHHLNAALRAHAIYQRDVDYIVRDGEVVIVDEFTGRTLSGRRWSDGLHQAVEAKEGVPVQRENQTLASITFQNLFRMYKKLSGMTGTADTEAYEFQSIYGLEVVVIPTNRPTVRKDHPDQVFLNRKGKFNAVLADIEDCAKRGQPVLVGTTSIETSEMLSEHLRKAGVKHEVLNAKQHEREATIVANAGQPGAVTIATNMAGRGTDIVLGGSLESEYHALGEDATEDARFKIKTDWQRRHDAVKAAGGLHIIGTERHESRRIDNQLRGRAGRQGDPGSSRFYLSLEDNLMRIFASDWVQKAMRMMGMKEDDVIEDRLVSRQIEKAQRKVEAHNFDIRKNLLDFDDVNNDQRKVIYAQRDELLDAESVKDNVDGIRGDVIYDLVARFVPPNSVDEQWDLKGLEATLESELGMSLSLTDMVRAQEEIDAEQIAAKVQTAVDAHFAEKEAAIGADTMRALEKHVMLTVLDQGWKEHLAKMDYLRQGIYLRGYAQKQPKQEYKKEAFELFSEMLENVKREVINLLARVRIRSEEEVAELEEQERLQAQARLMASQFQHQDVGGYGADEEVEQMQGGNAPVPVSQVTRDEPKVGRNDPCPCGSGKKYKHCHGQLS.

ATP-binding positions include glutamine 87, 105-109, and aspartate 508; that span reads GEGKT. A disordered region spans residues 869–912; it reads EQMQGGNAPVPVSQVTRDEPKVGRNDPCPCGSGKKYKHCHGQLS. Residues cysteine 896, cysteine 898, cysteine 907, and histidine 908 each coordinate Zn(2+). A compositionally biased stretch (basic residues) spans 902–912; that stretch reads KKYKHCHGQLS.

Belongs to the SecA family. As to quaternary structure, monomer and homodimer. Part of the essential Sec protein translocation apparatus which comprises SecA, SecYEG and auxiliary proteins SecDF-YajC and YidC. Zn(2+) is required as a cofactor.

Its subcellular location is the cell inner membrane. The protein localises to the cytoplasm. It carries out the reaction ATP + H2O + cellular proteinSide 1 = ADP + phosphate + cellular proteinSide 2.. In terms of biological role, part of the Sec protein translocase complex. Interacts with the SecYEG preprotein conducting channel. Has a central role in coupling the hydrolysis of ATP to the transfer of proteins into and across the cell membrane, serving both as a receptor for the preprotein-SecB complex and as an ATP-driven molecular motor driving the stepwise translocation of polypeptide chains across the membrane. In Xanthomonas axonopodis pv. citri (strain 306), this protein is Protein translocase subunit SecA.